The chain runs to 179 residues: Large ribosomal subunit protein uL5 (179 aa).

This sequence belongs to the universal ribosomal protein uL5 family. As to quaternary structure, part of the 50S ribosomal subunit; part of the 5S rRNA/L5/L18/L25 subcomplex. Contacts the 5S rRNA and the P site tRNA. Forms a bridge to the 30S subunit in the 70S ribosome.

Functionally, this is one of the proteins that bind and probably mediate the attachment of the 5S RNA into the large ribosomal subunit, where it forms part of the central protuberance. In the 70S ribosome it contacts protein S13 of the 30S subunit (bridge B1b), connecting the 2 subunits; this bridge is implicated in subunit movement. Contacts the P site tRNA; the 5S rRNA and some of its associated proteins might help stabilize positioning of ribosome-bound tRNAs. This chain is Large ribosomal subunit protein uL5, found in Shewanella oneidensis (strain ATCC 700550 / JCM 31522 / CIP 106686 / LMG 19005 / NCIMB 14063 / MR-1).